A 379-amino-acid polypeptide reads, in one-letter code: Alanine racemase (379 aa).

The Proton acceptor; specific for D-alanine role is filled by Lys-37. Position 37 is an N6-(pyridoxal phosphate)lysine (Lys-37). Arg-137 contacts substrate. Catalysis depends on Tyr-269, which acts as the Proton acceptor; specific for L-alanine. Met-317 serves as a coordination point for substrate.

The protein belongs to the alanine racemase family. Requires pyridoxal 5'-phosphate as cofactor.

It carries out the reaction L-alanine = D-alanine. It participates in amino-acid biosynthesis; D-alanine biosynthesis; D-alanine from L-alanine: step 1/1. Catalyzes the interconversion of L-alanine and D-alanine. May also act on other amino acids. This is Alanine racemase (alr) from Citrifermentans bemidjiense (strain ATCC BAA-1014 / DSM 16622 / JCM 12645 / Bem) (Geobacter bemidjiensis).